The following is a 54-amino-acid chain: UPF0391 membrane protein Pfl01_0044 (54 aa).

The next 2 membrane-spanning stretches (helical) occupy residues 4 to 24 and 29 to 49; these read WAIT…GGIA and GIAK…FFFG.

It belongs to the UPF0391 family.

The protein resides in the cell membrane. This chain is UPF0391 membrane protein Pfl01_0044, found in Pseudomonas fluorescens (strain Pf0-1).